Here is a 92-residue protein sequence, read N- to C-terminus: cAMP-dependent protein kinase inhibitor beta (92 aa).

A disordered region spans residues Met1–Glu26. Polar residues predominate over residues Pro7–Glu26. Phosphoserine is present on Ser56. Residues Glu70–Gly82 show a composition bias toward basic and acidic residues. The interval Glu70–Lys92 is disordered.

This sequence belongs to the PKI family.

In terms of biological role, extremely potent competitive inhibitor of cAMP-dependent protein kinase activity, this protein interacts with the catalytic subunit of the enzyme after the cAMP-induced dissociation of its regulatory chains. The sequence is that of cAMP-dependent protein kinase inhibitor beta (Pkib) from Mus musculus (Mouse).